Reading from the N-terminus, the 430-residue chain is Phosphoglucosamine mutase (430 aa).

Residue S93 is the Phosphoserine intermediate of the active site. S93, D227, D229, and D231 together coordinate Mg(2+). S93 is subject to Phosphoserine.

Belongs to the phosphohexose mutase family. Requires Mg(2+) as cofactor. Post-translationally, activated by phosphorylation.

The enzyme catalyses alpha-D-glucosamine 1-phosphate = D-glucosamine 6-phosphate. In terms of biological role, catalyzes the conversion of glucosamine-6-phosphate to glucosamine-1-phosphate. This chain is Phosphoglucosamine mutase, found in Thermosipho africanus (strain TCF52B).